The following is a 122-amino-acid chain: Large ribosomal subunit protein uL18 (122 aa).

The protein belongs to the universal ribosomal protein uL18 family. As to quaternary structure, part of the 50S ribosomal subunit; part of the 5S rRNA/L5/L18/L25 subcomplex. Contacts the 5S and 23S rRNAs.

In terms of biological role, this is one of the proteins that bind and probably mediate the attachment of the 5S RNA into the large ribosomal subunit, where it forms part of the central protuberance. The chain is Large ribosomal subunit protein uL18 from Trichlorobacter lovleyi (strain ATCC BAA-1151 / DSM 17278 / SZ) (Geobacter lovleyi).